We begin with the raw amino-acid sequence, 297 residues long: Acetylglutamate kinase (297 aa).

Residues 72–73 (GG), R94, and N187 each bind substrate.

The protein belongs to the acetylglutamate kinase family. ArgB subfamily.

The protein localises to the cytoplasm. It carries out the reaction N-acetyl-L-glutamate + ATP = N-acetyl-L-glutamyl 5-phosphate + ADP. Its pathway is amino-acid biosynthesis; L-arginine biosynthesis; N(2)-acetyl-L-ornithine from L-glutamate: step 2/4. In terms of biological role, catalyzes the ATP-dependent phosphorylation of N-acetyl-L-glutamate. In Synechocystis sp. (strain ATCC 27184 / PCC 6803 / Kazusa), this protein is Acetylglutamate kinase.